The chain runs to 394 residues: Elongation factor Tu (394 aa).

Positions 10 to 204 constitute a tr-type G domain; sequence KEHVNVGTIG…AVDTYIENPV (195 aa). The G1 stretch occupies residues 19 to 26; it reads GHVDHGKT. Residue 19–26 coordinates GTP; it reads GHVDHGKT. Mg(2+) is bound at residue T26. The G2 stretch occupies residues 60 to 64; that stretch reads GITIN. A G3 region spans residues 81–84; that stretch reads DCPG. GTP-binding positions include 81–85 and 136–139; these read DCPGH and NKCD. The G4 stretch occupies residues 136–139; sequence NKCD. Residues 174–176 form a G5 region; sequence SAL.

It belongs to the TRAFAC class translation factor GTPase superfamily. Classic translation factor GTPase family. EF-Tu/EF-1A subfamily. As to quaternary structure, monomer.

It is found in the cytoplasm. It catalyses the reaction GTP + H2O = GDP + phosphate + H(+). Functionally, GTP hydrolase that promotes the GTP-dependent binding of aminoacyl-tRNA to the A-site of ribosomes during protein biosynthesis. The protein is Elongation factor Tu of Mycoplasmopsis synoviae (strain 53) (Mycoplasma synoviae).